Reading from the N-terminus, the 460-residue chain is MFS-type transporter PUL3 (460 aa).

The next 8 helical transmembrane spans lie at 16–36, 50–70, 81–101, 113–133, 151–171, 181–201, 240–260, and 271–291; these read AVTL…SSVV, YLFI…FIIG, WVII…SCAG, IICG…TAIS, GICM…DFTV, APTF…MFVL, MFLS…FLTL, and VAFM…PDLV. Residues 300-323 are disordered; that stretch reads PSTQDETDTSDNDKIEKEESEQKS. The span at 310–323 shows a compositional bias: basic and acidic residues; that stretch reads DNDKIEKEESEQKS. A run of 4 helical transmembrane segments spans residues 333 to 353, 369 to 389, 408 to 428, and 433 to 453; these read VSLT…MIGA, IFFT…GSSV, FIGA…AALY, and GLPI…PSLV.

The protein belongs to the major facilitator superfamily. TCR/Tet family.

It is found in the cell membrane. In terms of biological role, MFS-type transporer required for the uptake of iron via the uptake of the siderophore pulcherrimin-iron complex. In Kluyveromyces lactis (strain ATCC 8585 / CBS 2359 / DSM 70799 / NBRC 1267 / NRRL Y-1140 / WM37) (Yeast), this protein is MFS-type transporter PUL3.